The sequence spans 470 residues: MKQLSTKVTSNGHGQDSSYFLGWEEYEKNPYDEIKNPNGMIQMGLAENQLCFDLIESWLTKNPDAASLKRNGQSIFRELALFQDYHGMPEFKKAMAEFMEEIRGNRVTFDPKKIVLAAGSTSANETLMFCLAEPGDAFLLPTPYYPGFDRDLKWRTGAEIVPIHCSSSNGFQITESALQQAYQQAQKLDLKVKGVLVTNPSNPLGTALTRRELNLLVDFITSKNIHLISDEIYSGTMFGFEQFISVMDVLKDKKLEDTEVSKRVHVVYSLSKDLGLPGFRVGAIYSNDEMIVSAATKMSSFGLVSSQTQYLLSALLSDKKFTSQYLEENQKRLKSRQRRLVSGLESAGITCLRSNAGLFCWVDMRHLLDTNTFEAELDLWKKIVYNVKLNISPGSSCHCTEPGWFRVCFANMSEDTLDLALKRLKTFVESTDCGRMISRSSHERLKSLRKKTVSNWVFRVSWTDRVPDER.

Positions 47 and 85 each coordinate substrate. An N6-(pyridoxal phosphate)lysine modification is found at Lys-272. Ser-461 carries the post-translational modification Phosphoserine.

Belongs to the class-I pyridoxal-phosphate-dependent aminotransferase family. Homodimer and heterodimer. In vivo, the relevance of heterodimerization with other ACS enzymes is however unsure. Interacts (via its C-terminal region) with FEI1, FEI2, ETO1, EOL1 and EOL2. Interacts with GRF3. Pyridoxal 5'-phosphate serves as cofactor. In terms of processing, may be processed at its C-terminus. Ubiquitinated. The interaction with ETO1 (and possibly EOL1 and EOL2) mediate its proteasome-dependent degradation. Its stability and degradation plays a central role in ethylene biosynthesis. Expressed in roots and siliques.

It carries out the reaction S-adenosyl-L-methionine = 1-aminocyclopropane-1-carboxylate + S-methyl-5'-thioadenosine + H(+). It participates in alkene biosynthesis; ethylene biosynthesis via S-adenosyl-L-methionine; ethylene from S-adenosyl-L-methionine: step 1/2. 1-aminocyclopropane-1-carboxylate synthase (ACS) enzymes catalyze the conversion of S-adenosyl-L-methionine (SAM) into 1-aminocyclopropane-1-carboxylate (ACC), a direct precursor of ethylene. In Arabidopsis thaliana (Mouse-ear cress), this protein is 1-aminocyclopropane-1-carboxylate synthase 5 (ACS5).